A 429-amino-acid polypeptide reads, in one-letter code: 3-phosphoshikimate 1-carboxyvinyltransferase (429 aa).

Residues Lys-23, Ser-24, and Arg-28 each contribute to the 3-phosphoshikimate site. Phosphoenolpyruvate is bound at residue Lys-23. Residues Gly-97 and Arg-125 each coordinate phosphoenolpyruvate. 3-phosphoshikimate contacts are provided by Ser-170, Ser-171, Gln-172, Ser-198, Asp-314, Asn-338, and Lys-342. Gln-172 serves as a coordination point for phosphoenolpyruvate. Residue Asp-314 is the Proton acceptor of the active site. Positions 346, 388, and 413 each coordinate phosphoenolpyruvate.

This sequence belongs to the EPSP synthase family. As to quaternary structure, monomer.

Its subcellular location is the cytoplasm. It carries out the reaction 3-phosphoshikimate + phosphoenolpyruvate = 5-O-(1-carboxyvinyl)-3-phosphoshikimate + phosphate. The protein operates within metabolic intermediate biosynthesis; chorismate biosynthesis; chorismate from D-erythrose 4-phosphate and phosphoenolpyruvate: step 6/7. In terms of biological role, catalyzes the transfer of the enolpyruvyl moiety of phosphoenolpyruvate (PEP) to the 5-hydroxyl of shikimate-3-phosphate (S3P) to produce enolpyruvyl shikimate-3-phosphate and inorganic phosphate. In Pectobacterium atrosepticum (strain SCRI 1043 / ATCC BAA-672) (Erwinia carotovora subsp. atroseptica), this protein is 3-phosphoshikimate 1-carboxyvinyltransferase.